A 261-amino-acid chain; its full sequence is Carbonic anhydrase 1 (261 aa).

Ala2 is modified (N-acetylalanine). Positions 4–261 constitute an Alpha-carbonic anhydrase domain; it reads PDWGYDGENG…LNGRTVKASF (258 aa). His65 serves as the catalytic Proton donor/acceptor. Positions 95, 97, and 120 each coordinate Zn(2+). Substrate contacts are provided by residues Thr200 and 200-201; that span reads TH.

This sequence belongs to the alpha-carbonic anhydrase family. Zn(2+) serves as cofactor.

It is found in the cytoplasm. The catalysed reaction is hydrogencarbonate + H(+) = CO2 + H2O. It catalyses the reaction urea = cyanamide + H2O. Inhibited by acetazolamide. Catalyzes the reversible hydration of carbon dioxide. Can hydrate cyanamide to urea. The sequence is that of Carbonic anhydrase 1 (CA1) from Bos taurus (Bovine).